The sequence spans 808 residues: Protein SEY1 (808 aa).

A disordered region spans residues 1 to 21; sequence MSSELSEGELSHTSSSSSFVP. Residues 1-701 lie on the Cytoplasmic side of the membrane; it reads MSSELSEGEL…KRSIVQHITQ (701 aa). Positions 57–286 constitute a GB1/RHD3-type G domain; sequence GNNYHIISVF…VGDELFKPEY (230 aa). 67–74 contacts GTP; that stretch reads GSQSTGKS. The chain crosses the membrane as a helical span at residues 702–722; that stretch reads IPYYIYLVIVFLGWNEFMAII. The Lumenal portion of the chain corresponds to 723–725; that stretch reads RNP. Residues 726-746 form a helical membrane-spanning segment; sequence LLFSLALLLGASVYILYKLNL. The Cytoplasmic segment spans residues 747 to 808; it reads LKPAIVVAQR…YSDNIELDDM (62 aa).

It belongs to the TRAFAC class dynamin-like GTPase superfamily. GB1/RHD3 GTPase family. RHD3 subfamily.

Its subcellular location is the endoplasmic reticulum membrane. Its function is as follows. Cooperates with the reticulon proteins and tubule-shaping DP1 family proteins to generate and maintain the structure of the tubular endoplasmic reticulum network. Has GTPase activity, which is required for its function in ER organization. This Candida tropicalis (strain ATCC MYA-3404 / T1) (Yeast) protein is Protein SEY1.